Reading from the N-terminus, the 86-residue chain is U-actitoxin-Avd10a (86 aa).

Positions 1 to 20 (MSRIAILLFVAFLLVAGISA) are cleaved as a signal peptide. The propeptide occupies 21 to 42 (KSTAHFKKNVLADLFKERRFNA). One can recognise a ShKT domain in the interval 51-86 (CVNIDVDSFCDGMAERGACNIIPQMATNCAKACNSC). 3 disulfide bridges follow: C51–C86, C60–C79, and C69–C83.

This sequence belongs to the sea anemone type 1 potassium channel toxin family. Type 1b subfamily.

It localises to the secreted. The protein localises to the nematocyst. Functionally, inhibits voltage-gated potassium channels (Kv1/KCNA). This Anemonia viridis (Snakelocks anemone) protein is U-actitoxin-Avd10a.